Consider the following 155-residue polypeptide: Ribosomal RNA large subunit methyltransferase H (155 aa).

Residues L73, G104, and 123–128 (ISKMTF) each bind S-adenosyl-L-methionine.

Belongs to the RNA methyltransferase RlmH family. In terms of assembly, homodimer.

It is found in the cytoplasm. The catalysed reaction is pseudouridine(1915) in 23S rRNA + S-adenosyl-L-methionine = N(3)-methylpseudouridine(1915) in 23S rRNA + S-adenosyl-L-homocysteine + H(+). Functionally, specifically methylates the pseudouridine at position 1915 (m3Psi1915) in 23S rRNA. The polypeptide is Ribosomal RNA large subunit methyltransferase H (Francisella tularensis subsp. novicida (strain U112)).